Here is a 251-residue protein sequence, read N- to C-terminus: Flap endonuclease Xni (251 aa).

A Mg(2+)-binding site is contributed by Asp104. Residues 160–249 (VQPQQLPDYW…IDGNLQQLRL (90 aa)) form the 5'-3' exonuclease domain. Residues Leu171, Ala172, Pro180, Val182, and Ile185 each contribute to the K(+) site. The interaction with DNA stretch occupies residues 184-189 (GIGPKS).

This sequence belongs to the Xni family. Mg(2+) is required as a cofactor. The cofactor is K(+).

Has flap endonuclease activity. During DNA replication, flap endonucleases cleave the 5'-overhanging flap structure that is generated by displacement synthesis when DNA polymerase encounters the 5'-end of a downstream Okazaki fragment. The sequence is that of Flap endonuclease Xni from Escherichia coli O6:K15:H31 (strain 536 / UPEC).